The primary structure comprises 457 residues: MLRTVTSKTVSNQFKRSLATAVATPKAEVTQLSNGIVVATEHNPSAHTASVGVVFGSGAANENPYNNGVSNLWKNIFLSKENSAVAAKEGLALSSNISRDFQSYIVSSLPGSTDKSLDFLNQSFIQQKANLLSSSNFEATKKSVLKQVQDFEENDHPNRVLEHLHSTAFQNTPLSLPTRGTLESLENLVVADLESFANNHFLNSNAVVVGTGNIKHEDLVNSIESKNLSLQTGTKPVLKKKAAFLGSEVRLRDDTLPKAWISLAVEGEPVNSPNYFVAKLAAQIFGSYNAFEPASRLQGIKLLDNIQEYQLCDNFNHFSLSYKDSGLWGFSTATRNVTMIDDLIHFTLKQWNRLTISVTDTEVERAKSLLKLQLGQLYESGNPVNDANLLGAEVLIKGSKLSLGEAFKKIDAITVKDVKAWAGKRLWDQDIAIAGTGQIEGLLDYMRIRSDMSMMRW.

The transit peptide at 1–26 (MLRTVTSKTVSNQFKRSLATAVATPK) directs the protein to the mitochondrion.

It belongs to the peptidase M16 family. UQCRC1/QCR1 subfamily. Component of the ubiquinol-cytochrome c oxidoreductase (cytochrome b-c1 complex, complex III, CIII), a multisubunit enzyme composed of 10 subunits. The complex is composed of 3 respiratory subunits cytochrome b (COB), cytochrome c1 (CYT1) and Rieske protein (RIP1), 2 core protein subunits COR1 and QCR2, and 5 low-molecular weight protein subunits QCR6, QCR7, QCR8, QCR9 and QCR10. The complex exists as an obligatory dimer and forms supercomplexes (SCs) in the inner mitochondrial membrane with a monomer or a dimer of cytochrome c oxidase (complex IV, CIV), resulting in 2 different assemblies (supercomplexes III(2)IV and III(2)IV(2)). COR1 interacts with COX5A at the CIII-CIV interface.

The protein localises to the mitochondrion inner membrane. In terms of biological role, component of the ubiquinol-cytochrome c oxidoreductase, a multisubunit transmembrane complex that is part of the mitochondrial electron transport chain which drives oxidative phosphorylation. The respiratory chain contains 3 multisubunit complexes succinate dehydrogenase (complex II, CII), ubiquinol-cytochrome c oxidoreductase (cytochrome b-c1 complex, complex III, CIII) and cytochrome c oxidase (complex IV, CIV), that cooperate to transfer electrons derived from NADH and succinate to molecular oxygen, creating an electrochemical gradient over the inner membrane that drives transmembrane transport and the ATP synthase. The cytochrome b-c1 complex catalyzes electron transfer from ubiquinol to cytochrome c, linking this redox reaction to translocation of protons across the mitochondrial inner membrane, with protons being carried across the membrane as hydrogens on the quinol. In the process called Q cycle, 2 protons are consumed from the matrix, 4 protons are released into the intermembrane space and 2 electrons are passed to cytochrome c. This chain is Cytochrome b-c1 complex subunit 1, mitochondrial (COR1), found in Saccharomyces cerevisiae (strain ATCC 204508 / S288c) (Baker's yeast).